Reading from the N-terminus, the 69-residue chain is Probable cold shock protein y4cH (69 aa).

The region spanning 5–65 (GTVKWFNATK…DRKSGKMSAD (61 aa)) is the CSD domain.

The protein resides in the cytoplasm. This chain is Probable cold shock protein y4cH, found in Sinorhizobium fredii (strain NBRC 101917 / NGR234).